Reading from the N-terminus, the 332-residue chain is L-lactate dehydrogenase A chain (332 aa).

Residues 29 to 57 and R99 contribute to the NAD(+) site; that span reads GAVGMACAISILMKDLADELTLVDVVEDK. R106, N138, and R169 together coordinate substrate. N138 is a binding site for NAD(+). H193 (proton acceptor) is an active-site residue. Residue T248 participates in substrate binding.

Belongs to the LDH/MDH superfamily. LDH family. Homotetramer.

It localises to the cytoplasm. It catalyses the reaction (S)-lactate + NAD(+) = pyruvate + NADH + H(+). It participates in fermentation; pyruvate fermentation to lactate; (S)-lactate from pyruvate: step 1/1. In terms of biological role, interconverts simultaneously and stereospecifically pyruvate and lactate with concomitant interconversion of NADH and NAD(+). The protein is L-lactate dehydrogenase A chain (LDHA) of Gallus gallus (Chicken).